A 198-amino-acid chain; its full sequence is Guanylate kinase (198 aa).

In terms of domain architecture, Guanylate kinase-like spans 8 to 188 (GRVVVLSGPS…ACSELVSLLV (181 aa)). 15–22 (GPSAVGKS) contacts ATP.

It belongs to the guanylate kinase family.

The protein resides in the cytoplasm. It carries out the reaction GMP + ATP = GDP + ADP. Its function is as follows. Essential for recycling GMP and indirectly, cGMP. The sequence is that of Guanylate kinase from Mycobacterium sp. (strain MCS).